A 196-amino-acid polypeptide reads, in one-letter code: DNA polymerase epsilon subunit D (196 aa).

Positions 125–196 (RKKEKLDSGE…ETRVQNLEQT (72 aa)) are disordered. Acidic residues predominate over residues 133-143 (GEVDADGDIDM). Basic and acidic residues predominate over residues 144 to 159 (GEDKENVPVEKVKEHD). Residues 160–173 (EIEEQGDALQDVEE) show a composition bias toward acidic residues. Positions 174–188 (SSEKKQKTESQDVET) are enriched in basic and acidic residues. S183 is subject to Phosphoserine; by ATM or ATR.

In terms of assembly, DNA polymerase epsilon is a heterotetramer consisting of POL2, DPB2, DPB3 and DPB4. Component of the ISW2 complex, which at least consists of ISW2, ITC1, DLS1 and DPB4.

The protein resides in the nucleus. As accessory component of the DNA polymerase epsilon (DNA polymerase II) participates in chromosomal DNA replication. It is required during synthesis of the leading and lagging DNA strands at the replication fork and binds at/or near replication origins and moves along DNA with the replication fork. It has 3'-5' proofreading exonuclease activity that correct errors arising during DNA replication. It is also involved in DNA synthesis during DNA repair. Also functions as a component of the ISW2 complex, which acts in remodeling the chromatin by catalyzing an ATP-dependent alteration in the structure of nucleosomal DNA. The ISW2 complex is involved in coordinating transcriptional repression and in inheritance of telomeric silencing. It is involved in repression of MAT a-specific genes, INO1, and early meiotic genes during mitotic growth dependent upon transcription factor UME6 and in a parallel pathway to the RPD3-SIN3 histone deacetylase complex. The sequence is that of DNA polymerase epsilon subunit D (DPB4) from Saccharomyces cerevisiae (strain ATCC 204508 / S288c) (Baker's yeast).